A 153-amino-acid chain; its full sequence is Protein SprT-like (153 aa).

Residues Q7–S145 form the SprT-like domain. H67 contacts Zn(2+). E68 is an active-site residue. A Zn(2+)-binding site is contributed by H71.

Belongs to the SprT family. It depends on Zn(2+) as a cofactor.

The protein localises to the cytoplasm. The polypeptide is Protein SprT-like (Enterococcus faecalis (strain ATCC 700802 / V583)).